Reading from the N-terminus, the 873-residue chain is MANITPMMQQYLKIKSEYDDCLLFFRLGDFYEMFFDDAKEASRVLEITLTKRDAKKENPIPMCGVPYHSADNYIETLINKGYKVAICEQMEDPKQTKGMVRREVVRIITPGTVMDQNGMDEKKNNYILSFIENEEFGLCYCDVSTGELKVTHFKDTATLLNEITTINPNEIVIKQALSEELKRQINMITETITVREDISDEDYDMNQLTHQLMHDTTQLLLDYIHHTQKRDLSHIEEVIEYAAVDYMKMDYYAKRNLELTESIRLKSKKGTLLWLMDETKTPMGARRLKQWIDRPLINKQQINDRLNIVEEFMDRFIERDTLRNHLNQVYDIERLVGRVSYGNVNARDLIQLKHSISEIPHIKALLNELGAQTTTQFKELEPLDDLLQILEESLVEEPPISIKDGGLFKNGFNAQLDEYLEASKNGKTWLAELQAKERERTGIKSLKISFNKVFGYFIEITRANLNNFQPEAFGYNRKQTLSNAERFITDELKEKEDIILGAEDKAVELEYELFVKLREHIKTYTERLQKQAKIISELDCLQSFAEIAQKYNYVKPTFSDDKVLHLENSRHPVVERVMDYNDYVPNDCHLDDETFIYLITGPNMSGKSTYMRQVAIISIMAQMGAYVPCDSATLPIFDQIFTRIGAADDLVSGKSTFMVEMLEAQKALTYATENSLIIFDEIGRGTSTYDGLALAQAMIEYVAQTSHAKTLFSTHYHELTSLDQMLKCLKNVHVAANEYQGELIFLHKVKDGAVDDSYGIQVAKLADLPNEVIDRAQVILNAFEQKPSYQLSHENTDNQQTVPSYNDFGRTEEEQSVIETHTSNHNYEQATFDLFDGYNQQSEVECQIRELNLSNMTPLEALIKLNELQSQLK.

601–608 (GPNMSGKS) serves as a coordination point for ATP.

Belongs to the DNA mismatch repair MutS family.

In terms of biological role, this protein is involved in the repair of mismatches in DNA. It is possible that it carries out the mismatch recognition step. This protein has a weak ATPase activity. This is DNA mismatch repair protein MutS from Staphylococcus epidermidis (strain ATCC 12228 / FDA PCI 1200).